The sequence spans 452 residues: Mitochondrial distribution and morphology protein 34 (452 aa).

Residues 1–196 (MSFRVKGWSD…LPSIIYKMSR (196 aa)) enclose the SMP-LTD domain.

This sequence belongs to the MDM34 family. Component of the ER-mitochondria encounter structure (ERMES) or MDM complex, composed of mmm1, mdm10, mdm12 and mdm34.

The protein resides in the mitochondrion outer membrane. Its function is as follows. Component of the ERMES/MDM complex, which serves as a molecular tether to connect the endoplasmic reticulum (ER) and mitochondria. Components of this complex are involved in the control of mitochondrial shape and protein biogenesis, and function in nonvesicular lipid trafficking between the ER and mitochondria. Mdm34 is required for the interaction of the ER-resident membrane protein mmm1 and the outer mitochondrial membrane-resident beta-barrel protein mdm10. This chain is Mitochondrial distribution and morphology protein 34, found in Schizosaccharomyces pombe (strain 972 / ATCC 24843) (Fission yeast).